The chain runs to 120 residues: Large ribosomal subunit protein uL24 (120 aa).

The segment at 1 to 26 is disordered; sequence MSKQPDKQRKSQRRAPLHERHKQVRA. The segment covering 10–24 has biased composition (basic residues); the sequence is KSQRRAPLHERHKQV.

It belongs to the universal ribosomal protein uL24 family. As to quaternary structure, part of the 50S ribosomal subunit. Interacts weakly with protein L4.

One of two assembly initiator proteins, it binds directly to the 5'-end of the 23S rRNA, where it nucleates assembly of the 50S subunit. Its function is as follows. Stabilizes the tertiary rRNA structure within the 23S rRNA domain (domain I) to which it binds. Located at the polypeptide exit tunnel on the outside of the subunit. The chain is Large ribosomal subunit protein uL24 (rpl24) from Haloarcula marismortui (strain ATCC 43049 / DSM 3752 / JCM 8966 / VKM B-1809) (Halobacterium marismortui).